A 529-amino-acid polypeptide reads, in one-letter code: Bifunctional purine biosynthesis protein PurH (529 aa).

An MGS-like domain is found at Met1–Thr146.

This sequence belongs to the PurH family.

The catalysed reaction is (6R)-10-formyltetrahydrofolate + 5-amino-1-(5-phospho-beta-D-ribosyl)imidazole-4-carboxamide = 5-formamido-1-(5-phospho-D-ribosyl)imidazole-4-carboxamide + (6S)-5,6,7,8-tetrahydrofolate. The enzyme catalyses IMP + H2O = 5-formamido-1-(5-phospho-D-ribosyl)imidazole-4-carboxamide. It functions in the pathway purine metabolism; IMP biosynthesis via de novo pathway; 5-formamido-1-(5-phospho-D-ribosyl)imidazole-4-carboxamide from 5-amino-1-(5-phospho-D-ribosyl)imidazole-4-carboxamide (10-formyl THF route): step 1/1. Its pathway is purine metabolism; IMP biosynthesis via de novo pathway; IMP from 5-formamido-1-(5-phospho-D-ribosyl)imidazole-4-carboxamide: step 1/1. This chain is Bifunctional purine biosynthesis protein PurH, found in Synechococcus sp. (strain CC9311).